The sequence spans 106 residues: ATP-dependent Clp protease adapter protein ClpS (106 aa).

This sequence belongs to the ClpS family. Binds to the N-terminal domain of the chaperone ClpA.

Its function is as follows. Involved in the modulation of the specificity of the ClpAP-mediated ATP-dependent protein degradation. This Nocardia farcinica (strain IFM 10152) protein is ATP-dependent Clp protease adapter protein ClpS.